We begin with the raw amino-acid sequence, 976 residues long: Serine/threonine-protein kinase CLA4 (976 aa).

Positions 1 to 46 are disordered; it reads MTSIYTSDLKNHRRAPPPPNGAAGSGSGSSSGSGSGSGSGSGSGSL. Over residues 23–43 the composition is skewed to gly residues; the sequence is AGSGSGSSSGSGSGSGSGSGS. In terms of domain architecture, PH spans 73-184; it reads SKRQSGWVHV…WLDAFTTKCP (112 aa). Residues 207 to 231 are disordered; the sequence is LTNGSLNGNSSSSPTSGLSSSSVLT. Residues 237–250 form the CRIB domain; it reads VSGPINFTHKVHVG. Disordered stretches follow at residues 298–522 and 559–658; these read GGNS…KIHP and SKKS…QLKK. 2 stretches are compositionally biased toward low complexity: residues 313 to 332 and 371 to 411; these read NSKT…AKNN and LNGS…PLNN. Residues 430-440 show a composition bias toward polar residues; that stretch reads SGTSSDTYSNK. Positions 441-455 are enriched in basic and acidic residues; that stretch reads NHQDRSGYEQQRQQR. Low complexity predominate over residues 456–487; the sequence is TDSSQQQQQQQKQHQYQQKSQQQQQQPLSSHQ. Residues 496–505 show a composition bias toward pro residues; it reads QVPPTLPSSG. The segment covering 559-583 has biased composition (low complexity); sequence SKKSQQQLASKQPSPPSSQQQQQKP. The segment covering 622–635 has biased composition (polar residues); it reads NETSGVSKTPSPTD. Residues 685–940 form the Protein kinase domain; it reads FRIVEKAGQG…TDELLEHSFI (256 aa). ATP contacts are provided by residues 691-699 and lysine 715; that span reads AGQGASGNV. Aspartate 808 (proton acceptor) is an active-site residue.

Belongs to the protein kinase superfamily. STE Ser/Thr protein kinase family. STE20 subfamily. As to quaternary structure, interacts (via the CRIB domain) with CDC42.

The catalysed reaction is L-seryl-[protein] + ATP = O-phospho-L-seryl-[protein] + ADP + H(+). The enzyme catalyses L-threonyl-[protein] + ATP = O-phospho-L-threonyl-[protein] + ADP + H(+). Ser/Thr kinase required for wild-type filamentous growth, chlamydospore formation, and virulence in mouse systemic infection. The sequence is that of Serine/threonine-protein kinase CLA4 (CLA4) from Candida albicans (strain SC5314 / ATCC MYA-2876) (Yeast).